The primary structure comprises 272 residues: Diaminopimelate epimerase (272 aa).

Substrate is bound by residues Asn11 and Asn63. Cys72 (proton donor) is an active-site residue. Substrate contacts are provided by residues 73-74, Asn190, and 208-209; these read GN and ER. The active-site Proton acceptor is Cys217. Substrate is bound at residue 218 to 219; it reads GT.

The protein belongs to the diaminopimelate epimerase family. In terms of assembly, homodimer.

The protein localises to the cytoplasm. It catalyses the reaction (2S,6S)-2,6-diaminopimelate = meso-2,6-diaminopimelate. The protein operates within amino-acid biosynthesis; L-lysine biosynthesis via DAP pathway; DL-2,6-diaminopimelate from LL-2,6-diaminopimelate: step 1/1. Catalyzes the stereoinversion of LL-2,6-diaminopimelate (L,L-DAP) to meso-diaminopimelate (meso-DAP), a precursor of L-lysine and an essential component of the bacterial peptidoglycan. This is Diaminopimelate epimerase from Clostridium perfringens (strain 13 / Type A).